Here is a 344-residue protein sequence, read N- to C-terminus: tRNA N6-adenosine threonylcarbamoyltransferase (344 aa).

Residues H111 and H115 each contribute to the Fe cation site. Substrate contacts are provided by residues 134-138, D167, G180, and N272; that span reads LVSGG. D300 is a binding site for Fe cation.

It belongs to the KAE1 / TsaD family. Fe(2+) is required as a cofactor.

It is found in the cytoplasm. It catalyses the reaction L-threonylcarbamoyladenylate + adenosine(37) in tRNA = N(6)-L-threonylcarbamoyladenosine(37) in tRNA + AMP + H(+). Required for the formation of a threonylcarbamoyl group on adenosine at position 37 (t(6)A37) in tRNAs that read codons beginning with adenine. Is involved in the transfer of the threonylcarbamoyl moiety of threonylcarbamoyl-AMP (TC-AMP) to the N6 group of A37, together with TsaE and TsaB. TsaD likely plays a direct catalytic role in this reaction. This Idiomarina loihiensis (strain ATCC BAA-735 / DSM 15497 / L2-TR) protein is tRNA N6-adenosine threonylcarbamoyltransferase.